The chain runs to 317 residues: Toluene-4-sulfonate monooxygenase system reductase subunit TsaB1 (317 aa).

In terms of domain architecture, FAD-binding FR-type spans 2–108 (SADVPVTVAA…RATCSEMAPE (107 aa)). 110–220 (RRVLLLAGGI…PGSVRMERFK (111 aa)) provides a ligand contact to NAD(+). One can recognise a 2Fe-2S ferredoxin-type domain in the interval 230–317 (QPFELVLQRA…CGGGRLVLDI (88 aa)). The [2Fe-2S] cluster site is built by Cys266, Cys271, Cys274, and Cys304.

As to quaternary structure, monomer. Part of the p-toluenesulfonate methyl-monooxygenase complex TsaBM, comprising the reductase TsaB and the oxygenase TsaM. FMN serves as cofactor.

Its function is as follows. Iron-sulfur flavoprotein carrying electrons from NADH to the oxygenase TsaM. Involved in the toluene-4-sulfonate degradation pathway. This is Toluene-4-sulfonate monooxygenase system reductase subunit TsaB1 (tsaB1) from Comamonas testosteroni (Pseudomonas testosteroni).